The following is a 3084-amino-acid chain: MEEFLQRAKSKLDRSKQLEQVHAVIGPKSCDLDSLISAFTYAYFLDKVSPPGVLCLPVLNIPRTEFNYFTETRFILEELNIPESFHIFRDEINLHQLNDEGKLSITLVGSHVLGSEDRTLESAVVRVINPGEQSDGELGFPETSSSLVLKELLREAPELITQQLAHLLRGSILFTWMSMDPELPEKQEEILSILEEQFPNLPPRDDIINVLQESQLSAQGLSLEQTMLKDLKELSDGEIKVAISTVNMTLEDYLLHGNITSDLKAFTDKFGFDVLILISSFTWEEQQRQQIAVYSQNLELCSQICCELEESQNPCLELEPFECGCDEILVYQQEDPSVTSDQVFLLLKEVINRRCAEMVSNSRTSSTEAVAGSAPLSQGSSGIMELYGSDIEPQPSSVNFIENPPELNDSNQAQADGNIDLVSPDSGLATIRSSRSSKESSVFLSDDSPVGDGGAPHHSLLPGFDSYSPIPEGIVAEEHAHSGEHSEHFDLFNFDSAPIASEQSQPSSHSADYSPEDDFPNSDSSEGNLSAGPKGLGEMGINMSNYSSSSLLSEAGKDSLVEFDEEFIQRQESSGDNSERNLSLTCFAGEEPSSPERLKNPGKMIPPTPMNSFVEISPSNEEPTPLYPEDIIQNAIDTGHLGPPQARARCRSWWGGLEIDSKNVVDTWNASEQESVFQSPEPWKDPKPEPVERRTSDSTFQPKSLEFSKSDPWESEFGQPELGNKEAQDQKEESLQYQHLPTVRPHLTDASPHGTNHLIEDFAALWHSGHSPTTMPEPWGNPTDAGEAAVTMSFPTWGAFDKEEDNADTLKNTWNLHPTNNETPSGQEPSEWAMGQSGFSFPAADLLDNPLIEVNKDAAPEIWGKNNSSKDTSLTSGSPTSDLGQTWNNSKLPGEDQNGLVDPKATGKVYEKEGSWSLFEESAKKRGADVLAPWEDSFLSYKCSDYSASNIGEDSVPSPLDTNYSTSDSYTSPTYAGDEKEIANKPVDKDNGFEAKDAEFPAEGLEVLATSSQQSQRNRIGSGPGNLDMWALPHTEDKPEGNDAHHPDSDALKTEHAEDKNASMEDDVRESSPSSYDDPSMMRLYEANRQLTLLHSNTNSRQAAPDSLDTWNRVTLEDTQSTATISDMDNDLDWDDCSGGVAISGDGQAEGYIAANSEPETRFSVKQLEPWGTEHQEANQVDWDLSASAEPTGDPGPSEYQTLNEKTGQLIANSIWDSVMGDKNMPSFRLPSPPNTVDMEHGTWPSESPRHSNGKDSHMLEASRLSESGGLTSQPVNQDTWGDSQGDTASSVTGLASPEHFAQSDPWTGHTYGQSESEIEGLVASDCEHLDKEAALGSGVNGAPWAFGKKPRDQEFSSSDAFEHQDISSASGKISSLSVTSSPQSEEPGEALEVEKEPFILDSLAVQTETFTWDLQSKDTHEESLVDHRNLGEANTTLDRINPMKNRPLSGMELEKTEACTILKPERANGKLLYESSQDFGVWDGPMDSDVWDSHISYETAMNSTGQRTEERSLEALSPGNYDRDSLSSGCTHSSASSPDLHDSSVALSSWTYGPSAEHQKENHDDANKQIHQESELFTTEAHVDVITEMKDFVENREDGFGKMSNQEDPQFPEIPNDPFNSGPSSSSSSLGADKYSEYSHAYQEGDLTTKRQEENELGFLEIVEPEGTRIISTSSGSGNDSGGDEELLEKELHLATVAQSEAGACTSLHEPAFSATEHSKPEFSVFVGSLESIEKENKSSPFSDSQQSSPGQWILSPLMQADTQDTCKEETRAAETGTMDTTWHGSASTEAKNGDPDKLEMLGFSADSTEWWNAGAQEGRANAGMSAEELSNSEGELEPTSPVFQNAGPWSLPIQNDSEPVDTGSTNPFRGKLKSPVLDSHGDKSQEKLWNIQPKQLDSDANQLSQLVILDQMKDKDSGQQTAMSPAAGDLPAETLTQGQGRESMLSVWDRAEPALTHRDENGCVSTGVSPTECQQENQWEPEKPYLSHVTHSSTPTENALESNAPTQLMRKLDSDWNSPSPSEPQHNFVPDILHGNFEEGGQLASASPDLWMDVKQPFSFKVDSENPDILTHCDHDSNSQASSSPDVCHDSEGEQKMEKHTAVYLGLEVEPSEFSLTEPNMNDEPTWEPEQESLPHNSELHSEHAMPLPPIDSQNDINNSSKPASSRSSPEPSDMRGDNNTSVTSMEEDTNPEVEAVDSVTIPGHFPRSEDADTFEAHQEVSVEVDDSWVSKDLCPESQTGTRALLDCEQPFASESPAVLTDIFLTSDTCLDVSEAALDHSFSDASGLNTSTGTIDDMSKLTLSEGHPETPVDGDAGKQDVCSSEASWGDFEYDAMGQNIDEELMREPEHFLYGGDLPSEESALKQSLTPYTPPFDLSYLTEPTGCTETAQGAESPGDESLGSDAAEMLLSALPDHREEDKAETNIRKPRYQMTVLHIHEDPEALSSPVGGTGSNNESSPSNIDWEIETDNSDSPAGGDMKPPNGKEILELEEDEKVIPTKGPKQTELEYKEEKQPEQSEDHQVLAVDYILVSHEKDSPLKPEAREARENIPELEQLSIGSRETGLPETQLSGTPDTCQSEFLNDVKVHSAERMSSSSNHESASLENPAQDQSWMVLSHSEVGDPPTETRDSGPESPGRTPEPFLSLSLDKGPKSQVLERNKPLNSLALEEVAGLSSQSRNIERQGQAGLDAVPTQAATHDNEWEMLSPQLSRKNRNPPQEMEEETQCPEPGPRKPRLKGPPSEDEGMDIHFEEGVLSPSAADMRPEPPNSLDLNGSHPRRIKLTAPNINLSLDQSEGSILSDDNLDSPDEIDINVDELDTPDEADSFEYTNHEDPTANKSSGQESESIPEYTAEEEREDNRLWRTVVIGEQEQRIDMKVIEPYRRVISHGGYYGDGLNAIIVFAACFLPDSSRADYHYVMENLFLYVISTLELMVAEDYMIVYLNGATPRRKMPGLGWMKKCYQMIDRRLRKNLKSFIIVHPSWFIRTILAVTRPFISSKFSSKIKYVTSLSELSGLIPMDCIHIPESIIKYDEEKSFKRSVRLDEELREASEAAKTSCLYNDPEMSSMEKDIDMKLKEKP.

The residue at position 1 (M1) is an N-acetylmethionine. The DHH motif motif lies at 109-111; that stretch reads GSH. Disordered stretches follow at residues 394-417, 430-465, 500-536, 672-733, 811-837, 861-907, 947-1080, 1224-1316, 1338-1395, 1502-1543, 1600-1652, 1776-1799, 1836-1886, 1961-1980, 2071-2196, 2410-2782, 2797-2816, and 2825-2859; these read QPSSVNFIENPPELNDSNQAQADG, TIRSSRSSKESSVFLSDDSPVGDGGAPHHSLLPGFD, ASEQSQPSSHSADYSPEDDFPNSDSSEGNLSAGPKGL, EQES…QKEE, KNTWNLHPTNNETPSGQEPSEWAMGQS, EIWG…KATG, SASN…DDPS, NMPS…GQSE, SGVN…LEVE, MNST…DLHD, GFGK…TTKR, ETGTMDTTWHGSASTEAKNGDPDK, GELE…GDKS, DENGCVSTGVSPTECQQENQ, ILTH…NPEV, MLLS…SHPR, QSEGSILSDDNLDSPDEIDI, and DEADSFEYTNHEDPTANKSSGQESESIPEYTAEEE. Polar residues predominate over residues 501 to 511; sequence SEQSQPSSHSA. Composition is skewed to basic and acidic residues over residues 682–696 and 723–733; these read PWKDPKPEPVERRTS and GNKEAQDQKEE. Polar residues-rich tracts occupy residues 811–828 and 865–891; these read KNTWNLHPTNNETPSGQE and KNNSSKDTSLTSGSPTSDLGQTWNNSK. Residues 962–975 show a composition bias toward low complexity; it reads TNYSTSDSYTSPTY. The span at 977–999 shows a compositional bias: basic and acidic residues; it reads GDEKEIANKPVDKDNGFEAKDAE. Residues 1009–1019 are compositionally biased toward polar residues; that stretch reads ATSSQQSQRNR. Residues 1034-1063 are compositionally biased toward basic and acidic residues; it reads HTEDKPEGNDAHHPDSDALKTEHAEDKNAS. Residues 1071 to 1080 show a composition bias toward low complexity; the sequence is SSPSSYDDPS. The span at 1248 to 1261 shows a compositional bias: basic and acidic residues; that stretch reads SPRHSNGKDSHMLE. Over residues 1265–1294 the composition is skewed to polar residues; it reads LSESGGLTSQPVNQDTWGDSQGDTASSVTG. A compositionally biased stretch (basic and acidic residues) spans 1350–1366; that stretch reads KPRDQEFSSSDAFEHQD. A compositionally biased stretch (low complexity) spans 1368-1378; it reads SSASGKISSLS. Polar residues-rich tracts occupy residues 1779–1792, 1854–1869, and 1965–1980; these read TMDTTWHGSASTEA, PIQNDSEPVDTGSTNP, and CVSTGVSPTECQQENQ. Positions 2089–2103 are enriched in basic and acidic residues; that stretch reads VCHDSEGEQKMEKHT. Positions 2162 to 2174 are enriched in low complexity; that stretch reads SSKPASSRSSPEP. Basic and acidic residues-rich tracts occupy residues 2416–2428, 2506–2525, and 2535–2553; these read PDHREEDKAETNI, KQTELEYKEEKQPEQSEDHQ, and SHEKDSPLKPEAREARENI. The span at 2569–2584 shows a compositional bias: polar residues; it reads PETQLSGTPDTCQSEF. Residues 2595–2606 show a composition bias toward low complexity; it reads RMSSSSNHESAS. Polar residues predominate over residues 2607 to 2617; sequence LENPAQDQSWM. Positions 2653–2664 are enriched in basic and acidic residues; that stretch reads KGPKSQVLERNK. Positions 2806-2816 are enriched in acidic residues; sequence DNLDSPDEIDI. The span at 2840–2849 shows a compositional bias: polar residues; the sequence is ANKSSGQESE. Positions 2879 to 3040 constitute a CRAL-TRIO domain; it reads DMKVIEPYRR…SIIKYDEEKS (162 aa).

The protein belongs to the PPase class C family. Prune subfamily.

Its subcellular location is the cytoplasm. May play an important role in regulating differentiation, survival and aggressiveness of the tumor cells. This chain is Protein prune homolog 2 (Prune2), found in Mus musculus (Mouse).